The sequence spans 89 residues: Small ribosomal subunit protein uS15 (89 aa).

Belongs to the universal ribosomal protein uS15 family. Part of the 30S ribosomal subunit. Forms a bridge to the 50S subunit in the 70S ribosome, contacting the 23S rRNA.

In terms of biological role, one of the primary rRNA binding proteins, it binds directly to 16S rRNA where it helps nucleate assembly of the platform of the 30S subunit by binding and bridging several RNA helices of the 16S rRNA. Forms an intersubunit bridge (bridge B4) with the 23S rRNA of the 50S subunit in the ribosome. The protein is Small ribosomal subunit protein uS15 of Nostoc sp. (strain PCC 7120 / SAG 25.82 / UTEX 2576).